A 69-amino-acid chain; its full sequence is Consomatin Be1 (69 aa).

Positions 1 to 22 (MEMAYWVMVMMMVWITAPLSEG) are cleaved as a signal peptide. The propeptide occupies 23-57 (GKLNDVIRALAPDDVTPQFILRSLISRRRSDSDVR). The residue at position 58 (Glu58) is a 4-carboxyglutamate. A disulfide bridge links Cys62 with Cys67. Trp64 bears the D-tryptophan mark. 4-hydroxyproline occurs at positions 68 and 69.

The protein belongs to the conotoxin C superfamily. Consomatin family. Expressed by the venom duct.

The protein resides in the secreted. Functionally, moderately activates human somatostatin receptors (SSTR) with a preferential activation of SSTR1 and SSTR4. In vivo, does not cause behavioral changes in mice within a few minutes of intracranial injection, but causes a progressive loss of movement thereafter. Four to five hours after injection, mice recover, even with the highest dose tested. Shows antinociception and antihyperalgesia activities in two mouse models of acute pain, most probably by acting outside the central nervous system. The polypeptide is Consomatin Be1 (Conus betulinus (Beech cone)).